We begin with the raw amino-acid sequence, 272 residues long: Zinc transporter ZupT (272 aa).

The next 8 helical transmembrane spans lie at 11 to 31 (IALAVTLAAGLATGLGSLMVV), 40 to 60 (LLAFGLAFAGGAMVYVSLTEI), 76 to 96 (LGFTFGTLTFLGGMLLIMVID), 126 to 146 (LMTAVAITAHNFPEGLATFFA), 158 to 178 (AFAIAIHNIPEGIAIAVPVYF), 189 to 209 (ASLLSGLAEPVGAGIGYLALF), 211 to 231 (VLSDAVFGTVFGLISGVMVFL), and 250 to 270 (VYGLVSGMGTLAISLVLFRFA). Fe(2+) contacts are provided by Asn136 and Glu139. Residues Glu139 and His164 each contribute to the Zn(2+) site. Fe(2+)-binding residues include Asn165, Glu168, and Glu197. Glu168 lines the Zn(2+) pocket.

It belongs to the ZIP transporter (TC 2.A.5) family. ZupT subfamily.

The protein resides in the cell inner membrane. It catalyses the reaction Zn(2+)(in) = Zn(2+)(out). Its function is as follows. Mediates zinc uptake. May also transport other divalent cations. This chain is Zinc transporter ZupT, found in Xanthomonas axonopodis pv. citri (strain 306).